A 272-amino-acid polypeptide reads, in one-letter code: NADPH-dependent 7-cyano-7-deazaguanine reductase (272 aa).

Position 82–84 (82–84 (IES)) interacts with substrate. Position 84–85 (84–85 (SK)) interacts with NADPH. Catalysis depends on Cys-178, which acts as the Thioimide intermediate. Asp-185 acts as the Proton donor in catalysis. A substrate-binding site is contributed by 217 to 218 (HE). 246–247 (RG) is an NADPH binding site.

The protein belongs to the GTP cyclohydrolase I family. QueF type 2 subfamily. Homodimer.

It is found in the cytoplasm. It carries out the reaction 7-aminomethyl-7-carbaguanine + 2 NADP(+) = 7-cyano-7-deazaguanine + 2 NADPH + 3 H(+). Its pathway is tRNA modification; tRNA-queuosine biosynthesis. Catalyzes the NADPH-dependent reduction of 7-cyano-7-deazaguanine (preQ0) to 7-aminomethyl-7-deazaguanine (preQ1). The chain is NADPH-dependent 7-cyano-7-deazaguanine reductase from Stenotrophomonas maltophilia (strain R551-3).